We begin with the raw amino-acid sequence, 397 residues long: tRNA pseudouridine synthase D (397 aa).

Residue Asp-76 is the Nucleophile of the active site. Residues 151-361 (GVPNFFGEQR…MEGERRPLRV (211 aa)) enclose the TRUD domain.

It belongs to the pseudouridine synthase TruD family.

The enzyme catalyses uridine(13) in tRNA = pseudouridine(13) in tRNA. Its function is as follows. Responsible for synthesis of pseudouridine from uracil-13 in transfer RNAs. In Geotalea daltonii (strain DSM 22248 / JCM 15807 / FRC-32) (Geobacter daltonii), this protein is tRNA pseudouridine synthase D.